The primary structure comprises 372 residues: tRNA-specific 2-thiouridylase MnmA (372 aa).

ATP is bound by residues 11–18 (GMSGGVDS) and Met-37. The segment at 97–99 (NPD) is interaction with target base in tRNA. Cys-102 (nucleophile) is an active-site residue. The cysteines at positions 102 and 199 are disulfide-linked. ATP is bound at residue Gly-126. The tract at residues 149 to 151 (KDQ) is interaction with tRNA. The Cysteine persulfide intermediate role is filled by Cys-199. The segment at 309–310 (RY) is interaction with tRNA.

This sequence belongs to the MnmA/TRMU family.

Its subcellular location is the cytoplasm. It catalyses the reaction S-sulfanyl-L-cysteinyl-[protein] + uridine(34) in tRNA + AH2 + ATP = 2-thiouridine(34) in tRNA + L-cysteinyl-[protein] + A + AMP + diphosphate + H(+). Its function is as follows. Catalyzes the 2-thiolation of uridine at the wobble position (U34) of tRNA, leading to the formation of s(2)U34. This is tRNA-specific 2-thiouridylase MnmA from Staphylococcus epidermidis (strain ATCC 35984 / DSM 28319 / BCRC 17069 / CCUG 31568 / BM 3577 / RP62A).